We begin with the raw amino-acid sequence, 297 residues long: Formylmethanofuran--tetrahydromethanopterin formyltransferase-like protein (297 aa).

The protein belongs to the FTR family.

This Methanothermobacter thermautotrophicus (strain ATCC 29096 / DSM 1053 / JCM 10044 / NBRC 100330 / Delta H) (Methanobacterium thermoautotrophicum) protein is Formylmethanofuran--tetrahydromethanopterin formyltransferase-like protein (ehaS).